Reading from the N-terminus, the 434-residue chain is MSESVGRTSAMHRLQVVLGHLAGRPESSSALQAAPCSATFPQASASDVVVVHGRRTPIGRAGRGGFKDTTPDELLSAVLTAVLQDVKLKPECLGDISVGNVLEPGAGAVMARIAQFLSGIPETVPLSAVNRQCSSGLQAVANIAGGIRNGSYDIGMACGVESMSLSNRGNPGNISSRLLESDKARDCLIPMGITSENVAERFGISRQKQDAFALASQQKAASAQSKGCFRAEIVPVTTTVLDDKGDRKTITVSQDEGVRPSTTMEGLAKLKPAFKDGGSTTAGNSSQVSDGAAAVLLARRSKAEELGLPILGVLRSYAVVGVPPDIMGIGPAYAIPAALQKAGLTVNDIDIFEINEAFASQALYCVEKLGIPAEKVNPLGGAIALGHPLGCTGARQVVTLLNELKRRGRRAYGVVSMCIGTGMGAAAVFEYPGN.

Residues 1-36 (MSESVGRTSAMHRLQVVLGHLAGRPESSSALQAAPC) constitute a peroxisome transit peptide. Residues 11–36 (MHRLQVVLGHLAGRPESSSALQAAPC) are PTS2-type peroxisomal targeting signal. The active-site Acyl-thioester intermediate is the cysteine 133. N6-acetyllysine occurs at positions 183 and 244. Active-site proton acceptor residues include histidine 387 and cysteine 418.

Belongs to the thiolase-like superfamily. Thiolase family. Homodimer. Interacts (via PTS2-type peroxisomal targeting signal region) with PEX7; leading to its translocation into peroxisomes.

The protein resides in the peroxisome. It catalyses the reaction an acyl-CoA + acetyl-CoA = a 3-oxoacyl-CoA + CoA. It carries out the reaction 2 acetyl-CoA = acetoacetyl-CoA + CoA. The catalysed reaction is tetradecanoyl-CoA + acetyl-CoA = 3-oxohexadecanoyl-CoA + CoA. The enzyme catalyses hexanoyl-CoA + acetyl-CoA = 3-oxooctanoyl-CoA + CoA. It catalyses the reaction 3-oxohexadecanedioyl-CoA + CoA = tetradecanedioyl-CoA + acetyl-CoA. It carries out the reaction 3-oxo-(6Z,9Z,12Z,15Z,18Z,21Z)-tetracosahexaenoyl-CoA + CoA = (4Z,7Z,10Z,13Z,16Z,19Z)-docosahexaenoyl-CoA + acetyl-CoA. Its pathway is lipid metabolism; peroxisomal fatty acid beta-oxidation. Responsible for the thiolytic cleavage of straight chain 3-keto fatty acyl-CoAs (3-oxoacyl-CoAs). Plays an important role in fatty acid peroxisomal beta-oxidation. Catalyzes the cleavage of short, medium, long, and very long straight chain 3-oxoacyl-CoAs. Medium chain straight 3-oxoacyl-CoAs are preferred substrates. The protein is 3-ketoacyl-CoA thiolase A, peroxisomal of Rattus norvegicus (Rat).